A 152-amino-acid chain; its full sequence is Deoxyuridine 5'-triphosphate nucleotidohydrolase (152 aa).

Substrate is bound by residues 71–73 (RSG), asparagine 84, 88–90 (LID), and methionine 98.

It belongs to the dUTPase family. Mg(2+) serves as cofactor.

It catalyses the reaction dUTP + H2O = dUMP + diphosphate + H(+). It functions in the pathway pyrimidine metabolism; dUMP biosynthesis; dUMP from dCTP (dUTP route): step 2/2. Its function is as follows. This enzyme is involved in nucleotide metabolism: it produces dUMP, the immediate precursor of thymidine nucleotides and it decreases the intracellular concentration of dUTP so that uracil cannot be incorporated into DNA. In Shigella flexneri, this protein is Deoxyuridine 5'-triphosphate nucleotidohydrolase.